Consider the following 460-residue polypeptide: CCA-adding enzyme (460 aa).

ATP contacts are provided by S50 and R53. CTP contacts are provided by S50 and R53. Mg(2+) contacts are provided by D62, D64, and D117. H140, K159, and Y168 together coordinate ATP. H140, K159, and Y168 together coordinate CTP.

It belongs to the tRNA nucleotidyltransferase/poly(A) polymerase family. Archaeal CCA-adding enzyme subfamily. Homodimer. Mg(2+) is required as a cofactor.

The enzyme catalyses a tRNA precursor + 2 CTP + ATP = a tRNA with a 3' CCA end + 3 diphosphate. It carries out the reaction a tRNA with a 3' CCA end + 2 CTP + ATP = a tRNA with a 3' CCACCA end + 3 diphosphate. Catalyzes the addition and repair of the essential 3'-terminal CCA sequence in tRNAs without using a nucleic acid template. Adds these three nucleotides in the order of C, C, and A to the tRNA nucleotide-73, using CTP and ATP as substrates and producing inorganic pyrophosphate. tRNA 3'-terminal CCA addition is required both for tRNA processing and repair. Also involved in tRNA surveillance by mediating tandem CCA addition to generate a CCACCA at the 3' terminus of unstable tRNAs. While stable tRNAs receive only 3'-terminal CCA, unstable tRNAs are marked with CCACCA and rapidly degraded. The sequence is that of CCA-adding enzyme from Methanoregula boonei (strain DSM 21154 / JCM 14090 / 6A8).